We begin with the raw amino-acid sequence, 419 residues long: E3 ubiquitin-protein ligase RNF130 (419 aa).

Positions 1–27 are cleaved as a signal peptide; it reads MSGAARAGPARLAALALLTCSLWPTRA. Residues 28-194 are Extracellular-facing; sequence DNASQEYYTA…MPPKNFSRGS (167 aa). Residues N29, N40, N112, N135, N172, and N189 are each glycosylated (N-linked (GlcNAc...) asparagine). The PA domain occupies 105-176; it reads IALLQRGNCT…SYLEKNISVQ (72 aa). A helical transmembrane segment spans residues 195–217; that stretch reads LVFVSISFIVLMIISSAWLIFYF. Topologically, residues 218–419 are cytoplasmic; the sequence is IQKIRYTNAR…SLNANEVEWF (202 aa). Residues 264 to 305 form an RING-type zinc finger; the sequence is CAVCIESYKQNDVVRVLPCKHVFHKSCVDPWLSEHCTCPMCK. Position 341 is a phosphoserine (S341).

In testis sections, expressed in interstitial tissue and seminiferous tubules. In tubules, expression is mainly in postmeiotic germ cells and to a much lesser extent in Sertoli cells (at protein level). Expressed at high levels in liver, lung, stomach, heart and thymus.

It localises to the membrane. The protein localises to the cytoplasm. The enzyme catalyses S-ubiquitinyl-[E2 ubiquitin-conjugating enzyme]-L-cysteine + [acceptor protein]-L-lysine = [E2 ubiquitin-conjugating enzyme]-L-cysteine + N(6)-ubiquitinyl-[acceptor protein]-L-lysine.. Its pathway is protein modification; protein ubiquitination. Acts as an E3 ubiquitin-protein ligase. May have a role during the programmed cell death of hematopoietic cells. The chain is E3 ubiquitin-protein ligase RNF130 from Rattus norvegicus (Rat).